A 479-amino-acid polypeptide reads, in one-letter code: 3-phytase B (479 aa).

The N-terminal stretch at 1 to 19 (MPRTSLLTLACALATGASA) is a signal peptide. The Nucleophile role is filled by H82. Residues N106, N191, N227, N250, and N315 are each glycosylated (N-linked (GlcNAc...) asparagine). D338 (proton donor) is an active-site residue. N425, N442, and N458 each carry an N-linked (GlcNAc...) asparagine glycan.

It belongs to the histidine acid phosphatase family.

It carries out the reaction 1D-myo-inositol hexakisphosphate + H2O = 1D-myo-inositol 1,2,4,5,6-pentakisphosphate + phosphate. In terms of biological role, catalyzes the hydrolysis of inorganic orthophosphate from phytate. This Aspergillus niger protein is 3-phytase B (phyB).